The following is a 750-amino-acid chain: Sulfhydryl oxidase 1 (750 aa).

Residues 1–32 (MGRCNRGSGPPSSLLLLLLLLLWLLAVPGASA) form the signal peptide. Residues 39–159 (YSPSDPLTLL…RERLIDALES (121 aa)) form the Thioredoxin domain. Active-site nucleophile residues include Cys-73 and Cys-76. 2 disulfide bridges follow: Cys-73/Cys-76 and Cys-104/Cys-113. Asn-133 and Asn-246 each carry an N-linked (GlcNAc...) asparagine glycan. Cys-396 and Cys-408 are oxidised to a cystine. One can recognise an ERV/ALR sulfhydryl oxidase domain in the interval 399–506 (SEPHFRGFPC…EDPQFPKVQW (108 aa)). Positions 404, 411, and 415 each coordinate FAD. Ser-429 is modified (phosphoserine). Cys-452 and Cys-455 are oxidised to a cystine. Residues Asp-454, His-458, 481–488 (WSSHNRVN), Lys-503, and Trp-506 each bind FAD. A disulfide bridge connects residues Cys-512 and Cys-515. A glycan (N-linked (GlcNAc...) asparagine) is linked at Asn-578. A disordered region spans residues 578-645 (NSTVDLGKPE…REQPRGQWHL (68 aa)). Positions 624–639 (PPEHMAELQTNEREQP) are enriched in basic and acidic residues. The chain crosses the membrane as a helical span at residues 713-733 (ISLCVGLYSLSFMGLLAMYAY).

This sequence belongs to the quiescin-sulfhydryl oxidase (QSOX) family. Monomer. FAD is required as a cofactor. In terms of processing, N-glycosylated. O-glycosylated on Thr and Ser residues.

It is found in the golgi apparatus membrane. It localises to the secreted. It carries out the reaction 2 R'C(R)SH + O2 = R'C(R)S-S(R)CR' + H2O2. Functionally, catalyzes the oxidation of sulfhydryl groups in peptide and protein thiols to disulfides with the reduction of oxygen to hydrogen peroxide. Plays a role in disulfide bond formation in a variety of extracellular proteins. In fibroblasts, required for normal incorporation of laminin into the extracellular matrix, and thereby for normal cell-cell adhesion and cell migration. The sequence is that of Sulfhydryl oxidase 1 (QSOX1) from Pongo abelii (Sumatran orangutan).